Consider the following 197-residue polypeptide: Pyridoxal 5'-phosphate synthase subunit PdxT (197 aa).

L-glutamine is bound at residue 52-54 (GES). Cys83 serves as the catalytic Nucleophile. L-glutamine is bound by residues Arg115 and 142-143 (IR). Active-site charge relay system residues include His178 and Glu180.

This sequence belongs to the glutaminase PdxT/SNO family. In the presence of PdxS, forms a dodecamer of heterodimers. Only shows activity in the heterodimer.

The catalysed reaction is aldehydo-D-ribose 5-phosphate + D-glyceraldehyde 3-phosphate + L-glutamine = pyridoxal 5'-phosphate + L-glutamate + phosphate + 3 H2O + H(+). It catalyses the reaction L-glutamine + H2O = L-glutamate + NH4(+). The protein operates within cofactor biosynthesis; pyridoxal 5'-phosphate biosynthesis. Its function is as follows. Catalyzes the hydrolysis of glutamine to glutamate and ammonia as part of the biosynthesis of pyridoxal 5'-phosphate. The resulting ammonia molecule is channeled to the active site of PdxS. This chain is Pyridoxal 5'-phosphate synthase subunit PdxT, found in Korarchaeum cryptofilum (strain OPF8).